Reading from the N-terminus, the 533-residue chain is Death domain-containing ATP nucleosidase (533 aa).

Residues 1 to 262 form a death domain region; the sequence is MDAAAIISLL…TAAGKEEKVS (262 aa). Residues 184-248 are disordered; it reads STFVSDDATQ…TQTSTNSFNS (65 aa). Positions 218-227 are enriched in polar residues; the sequence is PSAQVNQPPT. Residues 236–248 show a composition bias toward low complexity; that stretch reads SGSTQTSTNSFNS. The purine nucleoside phosphorylase domain stretch occupies residues 263-533; that stretch reads DDVTKGIKFL…HLDDDRTIHM (271 aa).

The enzyme catalyses ATP + H2O = D-ribose 5-triphosphate + adenine. It carries out the reaction dATP + H2O = 2-deoxyribose 5-triphosphate + adenine. In terms of biological role, the C-terminal purine nucleoside phosphorylase (PNP) domain cleaves the N-glycosidic bond of ATP, and to a lesser extent dATP, to release adenine and a sugar triphosphate; has weak activity on ADP and AMP and no activity on dADP, dAMP, adenosine, deoxyadenosine or other (d)NTPs. The protein is Death domain-containing ATP nucleosidase (109585858) of Amphimedon queenslandica (Sponge).